We begin with the raw amino-acid sequence, 76 residues long: Exodeoxyribonuclease 7 small subunit (76 aa).

Belongs to the XseB family. In terms of assembly, heterooligomer composed of large and small subunits.

It is found in the cytoplasm. The enzyme catalyses Exonucleolytic cleavage in either 5'- to 3'- or 3'- to 5'-direction to yield nucleoside 5'-phosphates.. In terms of biological role, bidirectionally degrades single-stranded DNA into large acid-insoluble oligonucleotides, which are then degraded further into small acid-soluble oligonucleotides. This Bacillus cytotoxicus (strain DSM 22905 / CIP 110041 / 391-98 / NVH 391-98) protein is Exodeoxyribonuclease 7 small subunit.